The following is a 469-amino-acid chain: Cysteine--tRNA ligase (469 aa).

Cys29 contacts Zn(2+). The short motif at 31-41 is the 'HIGH' region element; that stretch reads PTVYNYIHIGN. The Zn(2+) site is built by Cys210, His235, and Glu239. The 'KMSKS' region signature appears at 267–271; sequence KMSKS. Lys270 provides a ligand contact to ATP.

The protein belongs to the class-I aminoacyl-tRNA synthetase family. In terms of assembly, monomer. Zn(2+) serves as cofactor.

The protein resides in the cytoplasm. The catalysed reaction is tRNA(Cys) + L-cysteine + ATP = L-cysteinyl-tRNA(Cys) + AMP + diphosphate. The chain is Cysteine--tRNA ligase from Thermosipho africanus (strain TCF52B).